The chain runs to 155 residues: MAEGETTTFRALTEKFNLPLGNYKKPKLLYCSNGGYFLRILPDGRVDGTKDRSDQHIQLQLYAESIGEVYIKSTETGQFLAMDTNGLLYGSQTPSEECLFLERLEENHYNTYISKKHAEKNWFIGLKKNGSSKLGPRTHFGQKAILFLPLPVSSD.

Position 2 is an N-acetylalanine (Ala-2). Positions 2-15 (AEGETTTFRALTEK) are excised as a propeptide. Asn-33 lines the heparin pocket. The heparin-binding stretch occupies residues 127 to 143 (KKNGSSKLGPRTHFGQK).

It belongs to the heparin-binding growth factors family. Monomer. Homodimer. Interacts with FGFR1, FGFR2, FGFR3 and FGFR4. Affinity between fibroblast growth factors (FGFs) and their receptors is increased by heparan sulfate glycosaminoglycans that function as coreceptors. Found in a complex with FGFBP1, FGF1 and FGF2. Interacts with FGFBP1. Part of a Cu(2+)-dependent multiprotein aggregate containing FGF1, S100A13 and SYT1. Interacts with SYT1. Interacts with S100A13. Interacts with LRRC59. Interacts with CSNKA, CSNKB and FIBP. While binding with LRRC59, CSNKA and FIBP seem mutually exclusive, CSNKB and FIBP may cooperatively interact with FGF1. Forms a ternary complex with FGFR1 and ITGAV:ITGB3 and induces the recruitment of PTPN11 to the complex. In the nucleus, phosphorylated by PKC/PRKCD.

The protein resides in the secreted. Its subcellular location is the cytoplasm. It localises to the cell cortex. The protein localises to the cytosol. It is found in the nucleus. In terms of biological role, plays an important role in the regulation of cell survival, cell division, angiogenesis, cell differentiation and cell migration. Functions as a potent mitogen in vitro. Acts as a ligand for FGFR1 and integrins. Binds to FGFR1 in the presence of heparin leading to FGFR1 dimerization and activation via sequential autophosphorylation on tyrosine residues which act as docking sites for interacting proteins, leading to the activation of several signaling cascades. Binds to integrin ITGAV:ITGB3. Its binding to integrin, subsequent ternary complex formation with integrin and FGFR1, and the recruitment of PTPN11 to the complex are essential for FGF1 signaling. Induces the phosphorylation and activation of FGFR1, FRS2, MAPK3/ERK1, MAPK1/ERK2 and AKT1. Can induce angiogenesis. The chain is Fibroblast growth factor 1 (FGF1) from Ovis aries (Sheep).